A 629-amino-acid polypeptide reads, in one-letter code: Putative polypeptide N-acetylgalactosaminyltransferase 10 (629 aa).

Topologically, residues 1-12 are cytoplasmic; it reads MGLSRYLSRRHH. Residues 13 to 33 traverse the membrane as a helical; Signal-anchor for type II membrane protein segment; the sequence is WVIQYCALLLFLYFIYSYVAV. The Lumenal segment spans residues 34 to 629; it reads SNDAPRLNEE…RQANEHKELE (596 aa). Asparagine 143 and asparagine 177 each carry an N-linked (GlcNAc...) asparagine glycan. 5 disulfide bridges follow: cysteine 154–cysteine 385, cysteine 376–cysteine 454, cysteine 493–cysteine 510, cysteine 539–cysteine 556, and cysteine 582–cysteine 598. A catalytic subdomain A region spans residues 163 to 275; sequence LPTVSVIFPF…YNWLPPLLDP (113 aa). Substrate is bound by residues aspartate 204 and arginine 236. Mn(2+)-binding residues include aspartate 259 and histidine 261. Residues 331 to 393 form a catalytic subdomain B region; the sequence is PFDSPVMAGG…PCSRVAHIYR (63 aa). Tryptophan 362 is a binding site for substrate. Histidine 390 lines the Mn(2+) pocket. Arginine 393 is a substrate binding site. Positions 393-406 are flexible loop; sequence RCKYAPFKNAGMGD. Positions 526 to 629 constitute a Ricin B-type lectin domain; that stretch reads TRWHDIRPKG…RQANEHKELE (104 aa).

This sequence belongs to the glycosyltransferase 2 family. GalNAc-T subfamily. Mn(2+) is required as a cofactor.

The protein localises to the golgi apparatus membrane. The catalysed reaction is L-seryl-[protein] + UDP-N-acetyl-alpha-D-galactosamine = a 3-O-[N-acetyl-alpha-D-galactosaminyl]-L-seryl-[protein] + UDP + H(+). The enzyme catalyses L-threonyl-[protein] + UDP-N-acetyl-alpha-D-galactosamine = a 3-O-[N-acetyl-alpha-D-galactosaminyl]-L-threonyl-[protein] + UDP + H(+). It participates in protein modification; protein glycosylation. May catalyze the initial reaction in O-linked oligosaccharide biosynthesis, the transfer of an N-acetyl-D-galactosamine residue to a serine or threonine residue on the protein receptor. The chain is Putative polypeptide N-acetylgalactosaminyltransferase 10 from Caenorhabditis briggsae.